The sequence spans 197 residues: Transmembrane protein 126A (197 aa).

The Mitochondrial matrix portion of the chain corresponds to 1–35 (MENHEPDGTIIKENLTDIIARKINQLPEAERNLLE). The helical transmembrane segment at 36–56 (NGSTYVGLNAALCGLIANSLF) threads the bilayer. The Mitochondrial intermembrane portion of the chain corresponds to 57–58 (RR). A helical transmembrane segment spans residues 59–79 (ILHVTQARIAAGLPMAVIPFL). The Mitochondrial matrix segment spans residues 80–107 (TANVSYKGFVSLPLNTGDLQCETCTVTR). The chain crosses the membrane as a helical span at residues 108–128 (GGLVGLVFGGLYPVFLAIPVN). Over 129–160 (GGLAARYNSALLPEKGNILNYWIRISKPVFRK) the chain is Mitochondrial intermembrane. A helical transmembrane segment spans residues 161-177 (MLFPILLQTGFAAYLGS). The Mitochondrial matrix portion of the chain corresponds to 178 to 197 (RQYKLLIKALQLPEPGLEIE).

It belongs to the TMEM126 family. As to quaternary structure, interacts with OXA1L; promoting cotranslational quality control in mitochondria.

Its subcellular location is the mitochondrion inner membrane. Its function is as follows. Protein required for the cotranslational protein quality control in the inner membrane of the mitochondria. Associates with newly synthesized polypeptides and may act as a chaperone that cooperates with OXA1L for the insertion of newly synthesized mitochondrial proteins into the inner membrane. Required for the assembly of the ND4 module of mitochondrial complex I. This chain is Transmembrane protein 126A (TMEM126A), found in Bos taurus (Bovine).